We begin with the raw amino-acid sequence, 228 residues long: Urease subunit gamma/beta (228 aa).

The interval 1 to 101 (MQLTERERDK…LVTVHDPIRG (101 aa)) is urease gamma. The urease beta stretch occupies residues 102 to 228 (AASRRVAGEY…ARAAGFGGAQ (127 aa)).

In the N-terminal section; belongs to the urease gamma subunit family. The protein in the C-terminal section; belongs to the urease beta subunit family. Heterohexamer of 3 UreC (alpha) and 3 UreAB (gamma/beta) subunits.

The protein resides in the cytoplasm. It carries out the reaction urea + 2 H2O + H(+) = hydrogencarbonate + 2 NH4(+). Its pathway is nitrogen metabolism; urea degradation; CO(2) and NH(3) from urea (urease route): step 1/1. The protein is Urease subunit gamma/beta of Deinococcus radiodurans (strain ATCC 13939 / DSM 20539 / JCM 16871 / CCUG 27074 / LMG 4051 / NBRC 15346 / NCIMB 9279 / VKM B-1422 / R1).